Consider the following 280-residue polypeptide: UPF0750 membrane protein YitT (280 aa).

Helical transmembrane passes span 9-29, 54-74, 80-100, and 151-171; these read LLIV…FLIP, FYIS…ILGW, SFTV…GILP, and VGTY…LLQG.

Belongs to the UPF0750 family.

Its subcellular location is the cell membrane. In Bacillus subtilis (strain 168), this protein is UPF0750 membrane protein YitT (yitT).